Consider the following 304-residue polypeptide: GS homeobox 2 (304 aa).

Residues 116–151 (AQFCPRVNHAHHHHHPPQHHHHHHQPQQPGSAAAAA) are disordered. The span at 123–140 (NHAHHHHHPPQHHHHHHQ) shows a compositional bias: basic residues. A compositionally biased stretch (low complexity) spans 141–151 (PQQPGSAAAAA). The homeobox DNA-binding region spans 202–261 (GKRMRTAFTSTQLLELEREFSSNMYLSRLRRIEIATYLNLSEKQVKIWFQNRRVKHKKEG). The tract at residues 283–304 (RSEDEDSLSPASANDDKEISPL) is disordered.

The protein belongs to the Antp homeobox family.

It is found in the nucleus. The protein localises to the cytoplasm. In terms of biological role, transcription factor that binds 5'-CNAATTAG-3' DNA sequence and regulates the expression of numerous genes including genes important for brain development. During telencephalic development, causes ventralization of pallial progenitors and, depending on the developmental stage, specifies different neuronal fates. At early stages, necessary and sufficient to correctly specify the ventral lateral ganglionic eminence (LGE) and its major derivatives, the striatal projection neurons. At later stages, may specify LGE progenitors toward dorsal LGE fates, including olfactory bulb interneurons. This is GS homeobox 2 (GSX2) from Homo sapiens (Human).